The sequence spans 337 residues: Beta-ketoacyl-[acyl-carrier-protein] synthase III (337 aa).

Residues cysteine 119 and histidine 260 contribute to the active site. Positions 261–265 (QANQR) are ACP-binding. The active site involves asparagine 290.

Belongs to the thiolase-like superfamily. FabH family. As to quaternary structure, homodimer.

It localises to the cytoplasm. The enzyme catalyses malonyl-[ACP] + acetyl-CoA + H(+) = 3-oxobutanoyl-[ACP] + CO2 + CoA. The protein operates within lipid metabolism; fatty acid biosynthesis. Catalyzes the condensation reaction of fatty acid synthesis by the addition to an acyl acceptor of two carbons from malonyl-ACP. Catalyzes the first condensation reaction which initiates fatty acid synthesis and may therefore play a role in governing the total rate of fatty acid production. Possesses both acetoacetyl-ACP synthase and acetyl transacylase activities. Its substrate specificity determines the biosynthesis of branched-chain and/or straight-chain of fatty acids. This is Beta-ketoacyl-[acyl-carrier-protein] synthase III from Synechococcus sp. (strain WH7803).